The primary structure comprises 358 residues: Trace amine-associated receptor 7f (358 aa).

The Extracellular segment spans residues 1–47; that stretch reads MSIADETVSWNQDSILSRDLFSATSAELCYENLNRSCVRSPYSPGPR. An N-linked (GlcNAc...) asparagine glycan is attached at asparagine 34. Cystine bridges form between cysteine 37/cysteine 201 and cysteine 120/cysteine 205. A helical transmembrane segment spans residues 48–68; sequence LILYAVFGFGAVLAVCGNLLV. Over 69–83 the chain is Cytoplasmic; sequence MTSILHFRQLHSPAN. The chain crosses the membrane as a helical span at residues 84-104; sequence FLVASLACADFLVGVMVMPFS. The Extracellular segment spans residues 105 to 121; it reads MVRSVEGCWYFGDSYCK. A helical transmembrane segment spans residues 122–143; the sequence is LHTCFDVSFCYCSLFHLCFISV. Over 144-166 the chain is Cytoplasmic; that stretch reads DRYIAVSDPLAYPTRFTASVSGK. A helical transmembrane segment spans residues 167 to 187; it reads CITFSWLLSISYGFSLIYTGA. At 188–212 the chain is on the extracellular side; the sequence is SEAGLEDLVSSLTCVGGCQIAVNQT. A glycan (N-linked (GlcNAc...) asparagine) is linked at asparagine 210. Residues 213–233 form a helical membrane-spanning segment; it reads WVFINFSVFLIPTLVMITVYS. Topologically, residues 234–274 are cytoplasmic; that stretch reads KIFLIAKQQAQNIEKMSKQTARASDSYKDRVAKRERKAAKT. Residues 275–295 traverse the membrane as a helical segment; the sequence is LGIAVAAFLLSWLPYFIDSFI. Residues 296–309 lie on the Extracellular side of the membrane; that stretch reads DAFLGFITPTYVYE. A helical transmembrane segment spans residues 310–333; the sequence is ILVWIVYYNSAMNPLIYAFFYPWF. At 334 to 358 the chain is on the cytoplasmic side; that stretch reads RKAIKLTVTGKILRENSSTTNLFSE.

It belongs to the G-protein coupled receptor 1 family. As to expression, specifically expressed in neurons of the olfactory epithelium.

It localises to the cell membrane. Its function is as follows. Olfactory receptor activated by trace amines, such as N-methylpiperidine and N,N-dimethylcyclohexylamine. Trace amine compounds are enriched in animal body fluids and act on trace amine-associated receptors (TAARs) to elicit both intraspecific and interspecific innate behaviors. Ligand-binding causes a conformation change that triggers signaling via G(s)-class of G alpha proteins (GNAL or GNAS). This Mus musculus (Mouse) protein is Trace amine-associated receptor 7f.